An 803-amino-acid polypeptide reads, in one-letter code: Exo-1,4-beta-xylosidase xlnD (803 aa).

Residues 1–18 form the signal peptide; the sequence is MRSLISVAVLSALPTAFS. N-linked (GlcNAc...) asparagine glycosylation is found at Asn21, Asn44, Asn85, Asn122, Asn140, and Asn234. Asp307 is an active-site residue. Residues Asn437, Asn474, Asn515, Asn611, Asn676, and Asn698 are each glycosylated (N-linked (GlcNAc...) asparagine).

This sequence belongs to the glycosyl hydrolase 3 family.

Its subcellular location is the secreted. The enzyme catalyses Hydrolysis of (1-&gt;4)-beta-D-xylans, to remove successive D-xylose residues from the non-reducing termini.. It functions in the pathway glycan degradation; xylan degradation. Its function is as follows. Xylan 1,4-beta-xylosidase involved in the hydrolysis of xylan, a major structural heterogeneous polysaccharide found in plant biomass representing the second most abundant polysaccharide in the biosphere, after cellulose. The protein is Exo-1,4-beta-xylosidase xlnD (xlnD) of Emericella nidulans (strain FGSC A4 / ATCC 38163 / CBS 112.46 / NRRL 194 / M139) (Aspergillus nidulans).